Reading from the N-terminus, the 904-residue chain is Translation initiation factor IF-2 (904 aa).

2 disordered regions span residues 134 to 248 (RQRN…GSHV) and 267 to 315 (HLSA…FERP). The span at 136 to 177 (RNLDEQQRLAESDRVRDEEIQRKRDEEQAAKDRAEAERKAAE) shows a compositional bias: basic and acidic residues. Low complexity-rich tracts occupy residues 178–230 (EAAA…STPA) and 285–303 (GRPG…RGSN). A tr-type G domain is found at 403-572 (TRPPVVTIMG…SLQAEVLELK (170 aa)). The interval 412-419 (GHVDHGKT) is G1. Residue 412–419 (GHVDHGKT) coordinates GTP. Residues 437-441 (GITQH) form a G2 region. The G3 stretch occupies residues 458-461 (DTPG). GTP-binding positions include 458–462 (DTPGH) and 512–515 (NKID). The tract at residues 512–515 (NKID) is G4. Residues 548–550 (SAK) form a G5 region.

This sequence belongs to the TRAFAC class translation factor GTPase superfamily. Classic translation factor GTPase family. IF-2 subfamily.

Its subcellular location is the cytoplasm. One of the essential components for the initiation of protein synthesis. Protects formylmethionyl-tRNA from spontaneous hydrolysis and promotes its binding to the 30S ribosomal subunits. Also involved in the hydrolysis of GTP during the formation of the 70S ribosomal complex. This is Translation initiation factor IF-2 from Xanthomonas oryzae pv. oryzae (strain PXO99A).